Consider the following 343-residue polypeptide: tRNA N6-adenosine threonylcarbamoyltransferase (343 aa).

Fe cation is bound by residues His116 and His120. Substrate contacts are provided by residues 139–143, Asp172, Gly185, Asp189, and Asn280; that span reads TVSGG. Asp308 contacts Fe cation.

This sequence belongs to the KAE1 / TsaD family. Requires Fe(2+) as cofactor.

The protein localises to the cytoplasm. It carries out the reaction L-threonylcarbamoyladenylate + adenosine(37) in tRNA = N(6)-L-threonylcarbamoyladenosine(37) in tRNA + AMP + H(+). Its function is as follows. Required for the formation of a threonylcarbamoyl group on adenosine at position 37 (t(6)A37) in tRNAs that read codons beginning with adenine. Is involved in the transfer of the threonylcarbamoyl moiety of threonylcarbamoyl-AMP (TC-AMP) to the N6 group of A37, together with TsaE and TsaB. TsaD likely plays a direct catalytic role in this reaction. The protein is tRNA N6-adenosine threonylcarbamoyltransferase of Cytophaga hutchinsonii (strain ATCC 33406 / DSM 1761 / CIP 103989 / NBRC 15051 / NCIMB 9469 / D465).